We begin with the raw amino-acid sequence, 125 residues long: Large ribosomal subunit protein bL19 (125 aa).

This sequence belongs to the bacterial ribosomal protein bL19 family.

Functionally, this protein is located at the 30S-50S ribosomal subunit interface and may play a role in the structure and function of the aminoacyl-tRNA binding site. This chain is Large ribosomal subunit protein bL19, found in Ehrlichia ruminantium (strain Welgevonden).